The sequence spans 1070 residues: Granule associated Rac and RHOG effector protein 1 (1070 aa).

Disordered stretches follow at residues glutamate 681–glycine 771, serine 855–proline 992, and serine 1032–tyrosine 1070. The segment covering proline 692 to alanine 702 has biased composition (pro residues). Low complexity-rich tracts occupy residues proline 719–glycine 742, alanine 906–serine 924, and threonine 951–threonine 962. At serine 723 the chain carries Phosphoserine. The span at proline 977–proline 992 shows a compositional bias: pro residues. Low complexity predominate over residues histidine 1046–glycine 1058.

As to quaternary structure, interacts with AGO2 and TNRC6A.

It localises to the cytoplasm. It is found in the P-body. Acts as an effector of RAC1. Associates with CCR4-NOT complex which is one of the major cellular mRNA deadenylases and is linked to various cellular processes including bulk mRNA degradation, miRNA-mediated repression, translational repression during translational initiation and general transcription regulation. May also play a role in miRNA silencing machinery. This is Granule associated Rac and RHOG effector protein 1 from Homo sapiens (Human).